Here is a 518-residue protein sequence, read N- to C-terminus: Arrestin-related trafficking adapter 10 (518 aa).

Lysine 118 participates in a covalent cross-link: Glycyl lysine isopeptide (Lys-Gly) (interchain with G-Cter in ubiquitin).

Belongs to the ART10 family. As to quaternary structure, interacts with RSP5. Post-translationally, ubiquitinated by RSP5.

The protein resides in the cytoplasm. Functionally, may regulate endocytosis by recruiting RSP5 ubiquitin ligase activity to specific plasma membrane proteins in response to extracellular stimuli. The sequence is that of Arrestin-related trafficking adapter 10 (ART10) from Saccharomyces cerevisiae (strain RM11-1a) (Baker's yeast).